A 456-amino-acid chain; its full sequence is Coenzyme F420 hydrogenase subunit alpha (456 aa).

Residues C63, C66, C432, and C435 each coordinate Ni(2+).

It belongs to the [NiFe]/[NiFeSe] hydrogenase large subunit family. Pentamer of two alpha chains, two beta chains and a gamma chain. Ni(2+) serves as cofactor. The cofactor is iron-sulfur cluster. Requires FAD as cofactor.

It localises to the cell membrane. It catalyses the reaction oxidized coenzyme F420-(gamma-L-Glu)(n) + H2 + H(+) = reduced coenzyme F420-(gamma-L-Glu)(n). In terms of biological role, reduces the physiological low-potential two-electron acceptor coenzyme F420, and the artificial one-electron acceptor methylviologen. The chain is Coenzyme F420 hydrogenase subunit alpha (frhA) from Methanosarcina barkeri (strain Fusaro / DSM 804).